Reading from the N-terminus, the 1805-residue chain is Obscurin-like protein 1 (1805 aa).

Phosphoserine is present on Ser-10. The 89-residue stretch at 12–100 (PCFLRFPRPV…GEAYAAAAVT (89 aa)) folds into the Ig-like 1 domain. Positions 17-19 (FPR) are interaction with TTN. Cys-33 and Cys-84 are joined by a disulfide. Residues 85–94 (RARNAAGEAY) are interaction with TTN. Pro residues predominate over residues 104–122 (PPAPEPEPQSSECPPPPPG). The disordered stretch occupies residues 104–131 (PPAPEPEPQSSECPPPPPGTGEGAPVFL). Ig-like domains follow at residues 128-225 (PVFL…ALLQ), 240-330 (PPVR…QTLS), and 339-425 (PRLR…ANVT). 3 disulfide bridges follow: Cys-149–Cys-209, Cys-267–Cys-319, and Cys-362–Cys-412. A Fibronectin type-III domain is found at 517–615 (PPGPPVLVEM…FNGSAHLVPT (99 aa)). 10 consecutive Ig-like domains span residues 720 to 800 (PQDK…FSVT), 804 to 891 (PPVH…FTVT), 902 to 982 (PNGK…FTIT), 986 to 1075 (PPVR…VTVT), 1078 to 1165 (PERI…FNVS), 1176 to 1261 (PEAV…FNVQ), 1266 to 1351 (PPVK…ARLH), 1355 to 1442 (TELL…ARLS), 1536 to 1628 (PVTI…REVS), and 1702 to 1798 (PAQS…ADTQ). Cystine bridges form between Cys-738–Cys-788, Cys-829–Cys-879, Cys-920–Cys-970, Cys-1011–Cys-1061, Cys-1103–Cys-1153, and Cys-1195–Cys-1245. Cys-1558 and Cys-1608 are disulfide-bonded.

As to quaternary structure, component of the 3M complex, composed of core components CUL7, CCDC8 and OBSL1. Interacts with CCDC8. Interacts with CUL7; the interaction is direct. Interacts with FBXW8. Interacts (via N-terminal Ig-like domain) with TTN/titin (via C-terminal Ig-like domain); the interaction is direct. In terms of tissue distribution, expressed in granule neurons, with levels decreasing with neuronal maturation.

It is found in the cytoplasm. The protein resides in the perinuclear region. It localises to the golgi apparatus. Core component of the 3M complex, a complex required to regulate microtubule dynamics and genome integrity. It is unclear how the 3M complex regulates microtubules, it could act by controlling the level of a microtubule stabilizer. Acts as a regulator of the Cul7-RING(FBXW8) ubiquitin-protein ligase, playing a critical role in the ubiquitin ligase pathway that regulates Golgi morphogenesis and dendrite patterning in brain. Required to localize CUL7 to the Golgi apparatus in neurons. This chain is Obscurin-like protein 1 (Obsl1), found in Rattus norvegicus (Rat).